The sequence spans 752 residues: Complement C2 (752 aa).

Positions 1-20 are cleaved as a signal peptide; it reads MGPLMVLFCLLFLYPGLADS. 3 consecutive Sushi domains span residues 22-86, 87-146, and 149-206; these read PSCP…VCKP, VRCP…VCDN, and GHCP…ICRQ. Intrachain disulfides connect Cys-24–Cys-64, Cys-51–Cys-84, Cys-89–Cys-131, Cys-117–Cys-144, Cys-151–Cys-191, and Cys-177–Cys-204. N-linked (GlcNAc...) asparagine glycosylation is present at Asn-29. Asn-112 carries N-linked (GlcNAc...) asparagine glycosylation. The 199-residue stretch at 254–452 folds into the VWFA domain; it reads NLYLLLDCSQ…KALHQVFEHM (199 aa). The MIDAS-like motif motif lies at 260 to 264; that stretch reads DCSQS. Residues Ser-262 and Ser-264 each coordinate Mg(2+). Asn-290 and Asn-333 each carry an N-linked (GlcNAc...) asparagine glycan. Thr-337 serves as a coordination point for Mg(2+). 3 disulfide bridges follow: Cys-463–Cys-581, Cys-492–Cys-508, and Cys-584–Cys-600. A Peptidase S1 domain is found at 464–744; it reads GVGNMSANAS…MQPWLRQHLG (281 aa). N-linked (GlcNAc...) asparagine glycans are attached at residues Asn-467 and Asn-471. Catalysis depends on charge relay system residues His-507 and Asp-561. Asn-621 carries N-linked (GlcNAc...) asparagine glycosylation. Cystine bridges form between Cys-638-Cys-665 and Cys-675-Cys-705. The active-site Charge relay system is the Ser-679.

The protein belongs to the peptidase S1 family. In terms of assembly, serine protease component of the C3 convertase, also named C4bC2b, composed of the serine protease complement C2b and complement C4b. Serine protease component of the C5 convertase, also named C4bC2bC3b, composed of the serine protease complement C2b, complement C3b, as well as complement C4b. Mg(2+) is required as a cofactor. The cofactor is Mn(2+). Post-translationally, cleaved and activated by different proteases depending on the complement pathway to generate complement C2a and serine protease complement C2b chains. Cleaved and activated by C1S following activation by the classical complement system. Cleaved and activated by MASP2 following activation by the lectin complement system. Cleaved and activated by GZMK following activation by the GZMK complement system.

The protein localises to the secreted. Its subcellular location is the cell surface. It carries out the reaction Selective cleavage of Arg-|-Ser bond in complement component C3 alpha-chain to form C3a and C3b, and Arg-|-Xaa bond in complement component C5 alpha-chain to form C5a and C5b.. Precursor of the catalytic component of the C3 and C5 convertase complexes, which are part of the complement pathway, a cascade of proteins that leads to phagocytosis and breakdown of pathogens and signaling that strengthens the adaptive immune system. Component C2 is part of the classical, lectin and GZMK complement systems. Its function is as follows. Catalytic component of the complement C3 and C5 convertase complexes. Following complement activation, recruited to the surface of pathogens by complement C4b opsonin to form the C3 convertase, or C3b and C4b opsonins to form the C5 convertase. As part of the C3 convertase, cleaves and activate C3 into C3a anaphylatoxin and C3b opsonin, the next components of the complement pathways. As part of the C5 convertase, cleaves and activate C5 into C5a anaphylatoxin and C5b component of the membrane attack complex. In Pongo pygmaeus (Bornean orangutan), this protein is Complement C2.